Consider the following 121-residue polypeptide: Flagellar protein FliT (121 aa).

Residues 1-50 (MNHAPHLYFAWQQLVEKSQLMLRLATEEQWDELIASEMAYVNAVQEIAHL) are required for homodimerization. The interval 60 to 98 (MQEQLRPMLRLILDNESKVKQLLQIRMDELAKLVGQSSV) is fliD binding.

Belongs to the FliT family. In terms of assembly, homodimer. Interacts with FliD and FlhC.

It localises to the cytoplasm. The protein localises to the cytosol. Its function is as follows. Dual-function protein that regulates the transcription of class 2 flagellar operons and that also acts as an export chaperone for the filament-capping protein FliD. As a transcriptional regulator, acts as an anti-FlhDC factor; it directly binds FlhC, thus inhibiting the binding of the FlhC/FlhD complex to class 2 promoters, resulting in decreased expression of class 2 flagellar operons. As a chaperone, effects FliD transition to the membrane by preventing its premature polymerization, and by directing it to the export apparatus. The polypeptide is Flagellar protein FliT (Escherichia coli O139:H28 (strain E24377A / ETEC)).